The following is a 120-amino-acid chain: Ribosome-binding factor A (120 aa).

It belongs to the RbfA family. In terms of assembly, monomer. Binds 30S ribosomal subunits, but not 50S ribosomal subunits or 70S ribosomes.

Its subcellular location is the cytoplasm. Its function is as follows. One of several proteins that assist in the late maturation steps of the functional core of the 30S ribosomal subunit. Associates with free 30S ribosomal subunits (but not with 30S subunits that are part of 70S ribosomes or polysomes). Required for efficient processing of 16S rRNA. May interact with the 5'-terminal helix region of 16S rRNA. This chain is Ribosome-binding factor A, found in Chlorobaculum tepidum (strain ATCC 49652 / DSM 12025 / NBRC 103806 / TLS) (Chlorobium tepidum).